Reading from the N-terminus, the 393-residue chain is NADH-quinone oxidoreductase subunit D (393 aa).

The protein belongs to the complex I 49 kDa subunit family. In terms of assembly, NDH-1 is composed of 14 different subunits. Subunits NuoB, C, D, E, F, and G constitute the peripheral sector of the complex.

The protein resides in the cell inner membrane. The enzyme catalyses a quinone + NADH + 5 H(+)(in) = a quinol + NAD(+) + 4 H(+)(out). In terms of biological role, NDH-1 shuttles electrons from NADH, via FMN and iron-sulfur (Fe-S) centers, to quinones in the respiratory chain. The immediate electron acceptor for the enzyme in this species is believed to be ubiquinone. Couples the redox reaction to proton translocation (for every two electrons transferred, four hydrogen ions are translocated across the cytoplasmic membrane), and thus conserves the redox energy in a proton gradient. In Ehrlichia chaffeensis (strain ATCC CRL-10679 / Arkansas), this protein is NADH-quinone oxidoreductase subunit D.